Consider the following 142-residue polypeptide: Hemoglobin subunit alpha-1 (142 aa).

S1 bears the N-acetylserine mark. The Globin domain maps to 1–142 (SLSDKDKAAV…VALALAERYR (142 aa)). Residue H59 participates in O2 binding. Residue H88 participates in heme b binding.

Belongs to the globin family. As to quaternary structure, hb1 is a heterotetramer of two alpha-1 chains and two beta chains. HbC is a heterotetramer of two alpha-1 chains and two beta-C chains. As to expression, red blood cells.

Involved in oxygen transport from gills to the various peripheral tissues. The protein is Hemoglobin subunit alpha-1 (hba1) of Trematomus newnesi (Dusky notothen).